A 371-amino-acid chain; its full sequence is Glycosyltransferase 8 domain-containing protein 1 (371 aa).

The Cytoplasmic portion of the chain corresponds to 1–7 (MSFRKVN). A helical; Signal-anchor for type II membrane protein membrane pass occupies residues 8–28 (IVILVLAVALFLLVLHHNFLG). Residues 29–371 (LSSLLRNEVS…RRHVEISNTK (343 aa)) lie on the Lumenal side of the membrane. 2 N-linked (GlcNAc...) asparagine glycosylation sites follow: Asn103 and Asn257.

Belongs to the glycosyltransferase 8 family.

It is found in the membrane. The polypeptide is Glycosyltransferase 8 domain-containing protein 1 (GLT8D1) (Bos taurus (Bovine)).